Reading from the N-terminus, the 96-residue chain is Large ribosomal subunit protein eL21 (96 aa).

A disordered region spans residues 1 to 66 (MPSSNGPLEG…FDGQTGTVEG (66 aa)).

It belongs to the eukaryotic ribosomal protein eL21 family. As to quaternary structure, part of the 50S ribosomal subunit. Interacts with protein L18 and binds the 5S rRNA. Has been cross-linked to L18.

Its function is as follows. This is one of 5 proteins that mediate the attachment of the 5S rRNA onto the large ribosomal subunit, stabilizing the orientation of adjacent RNA domains. In Haloarcula marismortui (strain ATCC 43049 / DSM 3752 / JCM 8966 / VKM B-1809) (Halobacterium marismortui), this protein is Large ribosomal subunit protein eL21 (rpl21e).